The primary structure comprises 773 residues: DNA gyrase subunit B (773 aa).

Residues 416–530 (SEIFLVEGDS…QGHVFIAQAP (115 aa)) form the Toprim domain. Residues glutamate 422, aspartate 495, and aspartate 497 each contribute to the Mg(2+) site.

This sequence belongs to the type II topoisomerase GyrB family. In terms of assembly, heterotetramer, composed of two GyrA and two GyrB chains. In the heterotetramer, GyrA contains the active site tyrosine that forms a transient covalent intermediate with DNA, while GyrB binds cofactors and catalyzes ATP hydrolysis. The cofactor is Mg(2+). It depends on Mn(2+) as a cofactor. Ca(2+) is required as a cofactor.

It localises to the cytoplasm. The enzyme catalyses ATP-dependent breakage, passage and rejoining of double-stranded DNA.. A type II topoisomerase that negatively supercoils closed circular double-stranded (ds) DNA in an ATP-dependent manner to modulate DNA topology and maintain chromosomes in an underwound state. Negative supercoiling favors strand separation, and DNA replication, transcription, recombination and repair, all of which involve strand separation. Also able to catalyze the interconversion of other topological isomers of dsDNA rings, including catenanes and knotted rings. Type II topoisomerases break and join 2 DNA strands simultaneously in an ATP-dependent manner. The chain is DNA gyrase subunit B from Helicobacter pylori (strain J99 / ATCC 700824) (Campylobacter pylori J99).